Here is a 443-residue protein sequence, read N- to C-terminus: tRNA modification GTPase MnmE (443 aa).

Arginine 23, glutamate 82, and lysine 121 together coordinate (6S)-5-formyl-5,6,7,8-tetrahydrofolate. In terms of domain architecture, TrmE-type G spans 215–364; sequence GTSIVLAGHP…LKQFIQKWMQ (150 aa). Asparagine 225 lines the K(+) pocket. GTP is bound by residues 225–230, 244–250, and 269–272; these read NVGKSS, TDIPGTT, and DSAG. Position 229 (serine 229) interacts with Mg(2+). Residues threonine 244, isoleucine 246, and threonine 249 each contribute to the K(+) site. Threonine 250 provides a ligand contact to Mg(2+). Lysine 443 provides a ligand contact to (6S)-5-formyl-5,6,7,8-tetrahydrofolate.

It belongs to the TRAFAC class TrmE-Era-EngA-EngB-Septin-like GTPase superfamily. TrmE GTPase family. As to quaternary structure, homodimer. Heterotetramer of two MnmE and two MnmG subunits. K(+) serves as cofactor.

It localises to the cytoplasm. Functionally, exhibits a very high intrinsic GTPase hydrolysis rate. Involved in the addition of a carboxymethylaminomethyl (cmnm) group at the wobble position (U34) of certain tRNAs, forming tRNA-cmnm(5)s(2)U34. This is tRNA modification GTPase MnmE from Chlamydia caviae (strain ATCC VR-813 / DSM 19441 / 03DC25 / GPIC) (Chlamydophila caviae).